We begin with the raw amino-acid sequence, 193 residues long: dTTP/UTP pyrophosphatase (193 aa).

Asp75 serves as the catalytic Proton acceptor.

It belongs to the Maf family. YhdE subfamily. The cofactor is a divalent metal cation.

It localises to the cytoplasm. It carries out the reaction dTTP + H2O = dTMP + diphosphate + H(+). The catalysed reaction is UTP + H2O = UMP + diphosphate + H(+). In terms of biological role, nucleoside triphosphate pyrophosphatase that hydrolyzes dTTP and UTP. May have a dual role in cell division arrest and in preventing the incorporation of modified nucleotides into cellular nucleic acids. This is dTTP/UTP pyrophosphatase from Koribacter versatilis (strain Ellin345).